Here is a 298-residue protein sequence, read N- to C-terminus: 3-hydroxyisobutyrate dehydrogenase (298 aa).

NAD(+)-binding positions include 2 to 30 (TDIA…VNVF), 65 to 66 (LP), and Thr96. Residue Lys171 is part of the active site. Lys246 contacts NAD(+).

It belongs to the HIBADH-related family.

It carries out the reaction 3-hydroxy-2-methylpropanoate + NAD(+) = 2-methyl-3-oxopropanoate + NADH + H(+). The protein operates within amino-acid degradation; L-valine degradation. This is 3-hydroxyisobutyrate dehydrogenase from Pseudomonas aeruginosa (strain ATCC 15692 / DSM 22644 / CIP 104116 / JCM 14847 / LMG 12228 / 1C / PRS 101 / PAO1).